Reading from the N-terminus, the 1378-residue chain is DNA-directed RNA polymerase subunit beta (1378 aa).

This sequence belongs to the RNA polymerase beta chain family. The RNAP catalytic core consists of 2 alpha, 1 beta, 1 beta' and 1 omega subunit. When a sigma factor is associated with the core the holoenzyme is formed, which can initiate transcription.

The catalysed reaction is RNA(n) + a ribonucleoside 5'-triphosphate = RNA(n+1) + diphosphate. In terms of biological role, DNA-dependent RNA polymerase catalyzes the transcription of DNA into RNA using the four ribonucleoside triphosphates as substrates. This Campylobacter jejuni subsp. jejuni serotype O:23/36 (strain 81-176) protein is DNA-directed RNA polymerase subunit beta.